We begin with the raw amino-acid sequence, 926 residues long: Protein translocase subunit SecA (926 aa).

ATP contacts are provided by residues Gln-87, 105–109 (GEGKT), and Asp-512. The Zn(2+) site is built by Cys-911, Cys-913, Cys-922, and His-923.

The protein belongs to the SecA family. Monomer and homodimer. Part of the essential Sec protein translocation apparatus which comprises SecA, SecYEG and auxiliary proteins SecDF-YajC and YidC. Zn(2+) serves as cofactor.

The protein localises to the cell inner membrane. It is found in the cytoplasm. It carries out the reaction ATP + H2O + cellular proteinSide 1 = ADP + phosphate + cellular proteinSide 2.. Part of the Sec protein translocase complex. Interacts with the SecYEG preprotein conducting channel. Has a central role in coupling the hydrolysis of ATP to the transfer of proteins into and across the cell membrane, serving both as a receptor for the preprotein-SecB complex and as an ATP-driven molecular motor driving the stepwise translocation of polypeptide chains across the membrane. The sequence is that of Protein translocase subunit SecA from Psychrobacter cryohalolentis (strain ATCC BAA-1226 / DSM 17306 / VKM B-2378 / K5).